We begin with the raw amino-acid sequence, 88 residues long: Low calcium response locus protein S (88 aa).

It belongs to the transposase 8 family.

The protein is Low calcium response locus protein S (lcrS) of Yersinia pestis.